Here is a 430-residue protein sequence, read N- to C-terminus: Adenylosuccinate synthetase (430 aa).

GTP contacts are provided by residues 12–18 and 40–42; these read GDEGKGK and GHT. Catalysis depends on D13, which acts as the Proton acceptor. Residues D13 and G40 each coordinate Mg(2+). Residues 13-16, 38-41, T130, R144, Q224, T239, and R303 each bind IMP; these read DEGK and NAGH. H41 functions as the Proton donor in the catalytic mechanism. 299 to 305 is a substrate binding site; that stretch reads TVTGRKR. GTP-binding positions include R305, 331 to 333, and 413 to 415; these read KLD and STS.

This sequence belongs to the adenylosuccinate synthetase family. As to quaternary structure, homodimer. Mg(2+) serves as cofactor.

The protein localises to the cytoplasm. The catalysed reaction is IMP + L-aspartate + GTP = N(6)-(1,2-dicarboxyethyl)-AMP + GDP + phosphate + 2 H(+). Its pathway is purine metabolism; AMP biosynthesis via de novo pathway; AMP from IMP: step 1/2. Its function is as follows. Plays an important role in the de novo pathway of purine nucleotide biosynthesis. Catalyzes the first committed step in the biosynthesis of AMP from IMP. This Cereibacter sphaeroides (strain ATCC 17025 / ATH 2.4.3) (Rhodobacter sphaeroides) protein is Adenylosuccinate synthetase.